A 638-amino-acid chain; its full sequence is Phosphomethylpyrimidine synthase (638 aa).

Residues Asn235, Met264, Tyr293, His329, 349–351 (SRG), 390–393 (DGLR), and Glu429 contribute to the substrate site. His433 is a Zn(2+) binding site. A substrate-binding site is contributed by Tyr456. His497 contributes to the Zn(2+) binding site. [4Fe-4S] cluster-binding residues include Cys577, Cys580, and Cys585.

The protein belongs to the ThiC family. Homodimer. Requires [4Fe-4S] cluster as cofactor.

It catalyses the reaction 5-amino-1-(5-phospho-beta-D-ribosyl)imidazole + S-adenosyl-L-methionine = 4-amino-2-methyl-5-(phosphooxymethyl)pyrimidine + CO + 5'-deoxyadenosine + formate + L-methionine + 3 H(+). The protein operates within cofactor biosynthesis; thiamine diphosphate biosynthesis. Functionally, catalyzes the synthesis of the hydroxymethylpyrimidine phosphate (HMP-P) moiety of thiamine from aminoimidazole ribotide (AIR) in a radical S-adenosyl-L-methionine (SAM)-dependent reaction. The sequence is that of Phosphomethylpyrimidine synthase from Polaromonas naphthalenivorans (strain CJ2).